We begin with the raw amino-acid sequence, 222 residues long: MLDYRQKIDALITKIEKARTAYSRHHIVKIVAVSKNASPEAIQHYYNCSQRAFGENKVQDLKTKMHSLEHLPLEWHMIGSLQENKINALLSLKPALLHSLDSLKLALKIEKRCEILGVNLNALLQVNSAYEESKSGVVPEEALEIYSQISETCKHLKLKGLMCIGAHTDDEKEIEKSFITTKKLFDQIKNASVLSMGMSDDFELAIACGANLLRIGSFLFKE.

An N6-(pyridoxal phosphate)lysine modification is found at lysine 35.

This sequence belongs to the pyridoxal phosphate-binding protein YggS/PROSC family.

In terms of biological role, pyridoxal 5'-phosphate (PLP)-binding protein, which is involved in PLP homeostasis. The sequence is that of Pyridoxal phosphate homeostasis protein from Helicobacter pylori (strain ATCC 700392 / 26695) (Campylobacter pylori).